Here is a 154-residue protein sequence, read N- to C-terminus: Ubiquitin-like protein 4A-A (154 aa).

Residues 1-76 (MILTVKPLQG…LNLVVRPAGE (76 aa)) form the Ubiquitin-like domain.

In terms of assembly, component of the BAT3 complex.

It localises to the cytoplasm. The protein resides in the cytosol. Component of the BAT3 complex, a multiprotein complex involved in the post-translational delivery of tail-anchored (TA) membrane proteins to the endoplasmic reticulum membrane. TA membrane proteins, also named type II transmembrane proteins, contain a single C-terminal transmembrane region. The chain is Ubiquitin-like protein 4A-A (ubl4aa) from Salmo salar (Atlantic salmon).